Here is a 633-residue protein sequence, read N- to C-terminus: 1-deoxy-D-xylulose-5-phosphate synthase (633 aa).

Thiamine diphosphate-binding positions include His72 and 113-115 (GHS). Asp144 is a Mg(2+) binding site. Residues 145 to 146 (GA), Asn173, Tyr284, and Glu367 each bind thiamine diphosphate. Residue Asn173 participates in Mg(2+) binding.

Belongs to the transketolase family. DXPS subfamily. Homodimer. Requires Mg(2+) as cofactor. The cofactor is thiamine diphosphate.

The enzyme catalyses D-glyceraldehyde 3-phosphate + pyruvate + H(+) = 1-deoxy-D-xylulose 5-phosphate + CO2. It participates in metabolic intermediate biosynthesis; 1-deoxy-D-xylulose 5-phosphate biosynthesis; 1-deoxy-D-xylulose 5-phosphate from D-glyceraldehyde 3-phosphate and pyruvate: step 1/1. Its function is as follows. Catalyzes the acyloin condensation reaction between C atoms 2 and 3 of pyruvate and glyceraldehyde 3-phosphate to yield 1-deoxy-D-xylulose-5-phosphate (DXP). The polypeptide is 1-deoxy-D-xylulose-5-phosphate synthase (Lysinibacillus sphaericus (strain C3-41)).